We begin with the raw amino-acid sequence, 209 residues long: Max dimerization protein 4 (209 aa).

Positions 6–23 (LLLLLEAAEYLERRDREA) are interaction with SIN3A and SIN3B. Positions 53–105 (NNRSSHNELEKHRRAKLRLYLEQLKQLGPLGPDSTRHTTLSLLKRAKMHIKKL) constitute a bHLH domain. The segment at 137 to 209 (SVERVRTDST…CRRPGCPGLS (73 aa)) is disordered. The span at 153–163 (DDSEQEVDIEG) shows a compositional bias: acidic residues. A compositionally biased stretch (polar residues) spans 185 to 195 (SLQSSGCSDSS).

Efficient DNA binding requires dimerization with another bHLH protein. Binds DNA as a heterodimer with MAX. Interacts with SIN3A AND SIN3B. Interacts with RNF17.

The protein resides in the nucleus. Functionally, transcriptional repressor. Binds with MAX to form a sequence-specific DNA-binding protein complex which recognizes the core sequence 5'-CAC[GA]TG-3'. Antagonizes MYC transcriptional activity by competing for MAX and suppresses MYC dependent cell transformation. The chain is Max dimerization protein 4 (Mxd4) from Mus musculus (Mouse).